The sequence spans 283 residues: Prepilin leader peptidase/N-methyltransferase (283 aa).

A run of 7 helical transmembrane segments spans residues 13–33 (VWLL…NVVI), 106–126 (WRYP…GLLW), 128–148 (PGLA…LAAI), 153–173 (QLLP…FNLA), 176–196 (FVPL…LWLI), 216–236 (LLAA…VLIA), and 259–279 (LAFG…NVLG).

It belongs to the peptidase A24 family.

It localises to the cell inner membrane. The enzyme catalyses Typically cleaves a -Gly-|-Phe- bond to release an N-terminal, basic peptide of 5-8 residues from type IV prepilin, and then N-methylates the new N-terminal amino group, the methyl donor being S-adenosyl-L-methionine.. In terms of biological role, plays a role in type II pseudopili formation by proteolytically removing the leader sequence from substrate proteins and subsequently monomethylating the alpha-amino group of the newly exposed N-terminal phenylalanine. Substrates include proteins required for biogenesis of the type II general secretory apparatus. This Dickeya chrysanthemi (Pectobacterium chrysanthemi) protein is Prepilin leader peptidase/N-methyltransferase (outO).